Reading from the N-terminus, the 378-residue chain is UPF0754 membrane protein SH1116 (378 aa).

A run of 2 helical transmembrane segments spans residues 4–24 (FLVILFMVVVGAVIGGVTNVI) and 358–378 (SLGFILGGIIGFFQGIVAIFV).

It belongs to the UPF0754 family.

Its subcellular location is the cell membrane. This chain is UPF0754 membrane protein SH1116, found in Staphylococcus haemolyticus (strain JCSC1435).